Here is a 358-residue protein sequence, read N- to C-terminus: Ferredoxin--NADP reductase (358 aa).

The FAD site is built by Asp38, Gln46, Tyr51, Val91, Phe126, Asp301, and Thr341.

This sequence belongs to the ferredoxin--NADP reductase type 2 family. Homodimer. It depends on FAD as a cofactor.

It catalyses the reaction 2 reduced [2Fe-2S]-[ferredoxin] + NADP(+) + H(+) = 2 oxidized [2Fe-2S]-[ferredoxin] + NADPH. The polypeptide is Ferredoxin--NADP reductase (Paracidovorax citrulli (strain AAC00-1) (Acidovorax citrulli)).